We begin with the raw amino-acid sequence, 593 residues long: Proline--tRNA ligase (593 aa).

The protein belongs to the class-II aminoacyl-tRNA synthetase family. ProS type 1 subfamily. Homodimer.

The protein resides in the cytoplasm. It catalyses the reaction tRNA(Pro) + L-proline + ATP = L-prolyl-tRNA(Pro) + AMP + diphosphate. Catalyzes the attachment of proline to tRNA(Pro) in a two-step reaction: proline is first activated by ATP to form Pro-AMP and then transferred to the acceptor end of tRNA(Pro). As ProRS can inadvertently accommodate and process non-cognate amino acids such as alanine and cysteine, to avoid such errors it has two additional distinct editing activities against alanine. One activity is designated as 'pretransfer' editing and involves the tRNA(Pro)-independent hydrolysis of activated Ala-AMP. The other activity is designated 'posttransfer' editing and involves deacylation of mischarged Ala-tRNA(Pro). The misacylated Cys-tRNA(Pro) is not edited by ProRS. In Synechococcus sp. (strain CC9902), this protein is Proline--tRNA ligase.